A 101-amino-acid chain; its full sequence is Antiviral protein CAP (101 aa).

Its function is as follows. Has antiviral activity against tobacco mosaic virus and antitumor activity. The protein is Antiviral protein CAP of Coprinus comatus (Shaggy mane).